The primary structure comprises 590 residues: Aspartate--tRNA(Asp/Asn) ligase (590 aa).

Glutamate 172 contributes to the L-aspartate binding site. Residues 196 to 199 (QLFK) form an aspartate region. Arginine 218 provides a ligand contact to L-aspartate. Residues 218–220 (RDE) and glutamine 227 contribute to the ATP site. Histidine 449 lines the L-aspartate pocket. ATP is bound at residue glutamate 484. Arginine 491 serves as a coordination point for L-aspartate. 536–539 (GIDR) serves as a coordination point for ATP.

The protein belongs to the class-II aminoacyl-tRNA synthetase family. Type 1 subfamily. As to quaternary structure, homodimer.

It localises to the cytoplasm. The catalysed reaction is tRNA(Asx) + L-aspartate + ATP = L-aspartyl-tRNA(Asx) + AMP + diphosphate. Its function is as follows. Aspartyl-tRNA synthetase with relaxed tRNA specificity since it is able to aspartylate not only its cognate tRNA(Asp) but also tRNA(Asn). Reaction proceeds in two steps: L-aspartate is first activated by ATP to form Asp-AMP and then transferred to the acceptor end of tRNA(Asp/Asn). The polypeptide is Aspartate--tRNA(Asp/Asn) ligase (Francisella tularensis subsp. tularensis (strain SCHU S4 / Schu 4)).